The primary structure comprises 359 residues: Histidinol-phosphate aminotransferase (359 aa).

Lysine 217 carries the post-translational modification N6-(pyridoxal phosphate)lysine.

The protein belongs to the class-II pyridoxal-phosphate-dependent aminotransferase family. Histidinol-phosphate aminotransferase subfamily. Homodimer. The cofactor is pyridoxal 5'-phosphate.

The catalysed reaction is L-histidinol phosphate + 2-oxoglutarate = 3-(imidazol-4-yl)-2-oxopropyl phosphate + L-glutamate. The protein operates within amino-acid biosynthesis; L-histidine biosynthesis; L-histidine from 5-phospho-alpha-D-ribose 1-diphosphate: step 7/9. This is Histidinol-phosphate aminotransferase from Salmonella enteritidis PT4 (strain P125109).